The sequence spans 262 residues: Small ribosomal subunit protein eS4 (262 aa).

Residues Leu-42–Val-105 enclose the S4 RNA-binding domain.

It belongs to the eukaryotic ribosomal protein eS4 family.

The chain is Small ribosomal subunit protein eS4 (RPS4) from Candida albicans (Yeast).